The primary structure comprises 267 residues: 4-hydroxy-tetrahydrodipicolinate reductase (267 aa).

NAD(+) is bound by residues 8-13 (GAAGRM) and Asp34. Residue Arg35 participates in NADP(+) binding. NAD(+)-binding positions include 98–100 (GTT) and 122–125 (AANF). His155 functions as the Proton donor/acceptor in the catalytic mechanism. His156 contributes to the (S)-2,3,4,5-tetrahydrodipicolinate binding site. Lys159 acts as the Proton donor in catalysis. 165-166 (GT) contacts (S)-2,3,4,5-tetrahydrodipicolinate.

This sequence belongs to the DapB family.

It localises to the cytoplasm. The enzyme catalyses (S)-2,3,4,5-tetrahydrodipicolinate + NAD(+) + H2O = (2S,4S)-4-hydroxy-2,3,4,5-tetrahydrodipicolinate + NADH + H(+). It catalyses the reaction (S)-2,3,4,5-tetrahydrodipicolinate + NADP(+) + H2O = (2S,4S)-4-hydroxy-2,3,4,5-tetrahydrodipicolinate + NADPH + H(+). It participates in amino-acid biosynthesis; L-lysine biosynthesis via DAP pathway; (S)-tetrahydrodipicolinate from L-aspartate: step 4/4. Catalyzes the conversion of 4-hydroxy-tetrahydrodipicolinate (HTPA) to tetrahydrodipicolinate. This is 4-hydroxy-tetrahydrodipicolinate reductase from Pseudomonas entomophila (strain L48).